A 393-amino-acid polypeptide reads, in one-letter code: Cyclin CCL1 (393 aa).

Positions 1 to 19 (MTDIQLNGKSTLDTPSATM) are enriched in polar residues. 2 disordered regions span residues 1–45 (MTDI…RISD) and 289–325 (SREGSQESVPGNEKEEPQNDASTTEKNKEKSTESEEY). Composition is skewed to basic and acidic residues over residues 21-35 (AKEKEAKLKSADENN) and 300-321 (NEKEEPQNDASTTEKNKEKSTE).

It belongs to the cyclin family. Cyclin C subfamily. CCL1 and KIN28 form the TFIIK complex, a component of TFIIH holo complex. Component of a complex consisting of KIN28, CCL1 and TFB3.

Regulatory component of the TFIIK complex (KIN28-CCL1 dimer) which is the protein kinase component of transcription factor IIH (TFIIH) and phosphorylates the C-terminal domain of RNA polymerase II during transition from transcription to elongation after preinitiation complex (PIC) formation, thereby positively regulating transcription. TFIIH (or factor B) is essential for both basal and activated transcription, and is involved in nucleotide excision repair (NER) of damaged DNA. TFIIH has DNA-dependent ATPase activity and is essential for polymerase II transcription in vitro. The chain is Cyclin CCL1 (CCL1) from Saccharomyces cerevisiae (strain ATCC 204508 / S288c) (Baker's yeast).